Here is a 449-residue protein sequence, read N- to C-terminus: Tubulin alpha chain (449 aa).

8 residues coordinate GTP: Q11, E71, S140, G144, T145, T179, N206, and N228. Mg(2+) is bound at residue E71. E254 is an active-site residue.

It belongs to the tubulin family. As to quaternary structure, dimer of alpha and beta chains. A typical microtubule is a hollow water-filled tube with an outer diameter of 25 nm and an inner diameter of 15 nM. Alpha-beta heterodimers associate head-to-tail to form protofilaments running lengthwise along the microtubule wall with the beta-tubulin subunit facing the microtubule plus end conferring a structural polarity. Microtubules usually have 13 protofilaments but different protofilament numbers can be found in some organisms and specialized cells. Requires Mg(2+) as cofactor.

It localises to the cytoplasm. Its subcellular location is the cytoskeleton. It carries out the reaction GTP + H2O = GDP + phosphate + H(+). Its function is as follows. Tubulin is the major constituent of microtubules, a cylinder consisting of laterally associated linear protofilaments composed of alpha- and beta-tubulin heterodimers. Microtubules grow by the addition of GTP-tubulin dimers to the microtubule end, where a stabilizing cap forms. Below the cap, tubulin dimers are in GDP-bound state, owing to GTPase activity of alpha-tubulin. The chain is Tubulin alpha chain (TUB1) from Gibberella zeae (strain ATCC MYA-4620 / CBS 123657 / FGSC 9075 / NRRL 31084 / PH-1) (Wheat head blight fungus).